The following is a 156-amino-acid chain: Small ribosomal subunit protein uS7 (156 aa).

It belongs to the universal ribosomal protein uS7 family. Part of the 30S ribosomal subunit. Contacts proteins S9 and S11.

Functionally, one of the primary rRNA binding proteins, it binds directly to 16S rRNA where it nucleates assembly of the head domain of the 30S subunit. Is located at the subunit interface close to the decoding center, probably blocks exit of the E-site tRNA. The protein is Small ribosomal subunit protein uS7 of Gloeobacter violaceus (strain ATCC 29082 / PCC 7421).